Consider the following 414-residue polypeptide: Histidinol dehydrogenase (414 aa).

NAD(+) is bound by residues Y116, Q177, and N200. The substrate site is built by T223, Q245, and H248. Zn(2+) contacts are provided by Q245 and H248. Catalysis depends on proton acceptor residues E313 and H314. Positions 314, 347, 401, and 406 each coordinate substrate. Zn(2+) is bound at residue D347. Position 406 (H406) interacts with Zn(2+).

This sequence belongs to the histidinol dehydrogenase family. It depends on Zn(2+) as a cofactor.

The enzyme catalyses L-histidinol + 2 NAD(+) + H2O = L-histidine + 2 NADH + 3 H(+). It participates in amino-acid biosynthesis; L-histidine biosynthesis; L-histidine from 5-phospho-alpha-D-ribose 1-diphosphate: step 9/9. Catalyzes the sequential NAD-dependent oxidations of L-histidinol to L-histidinaldehyde and then to L-histidine. This chain is Histidinol dehydrogenase, found in Staphylococcus epidermidis (strain ATCC 12228 / FDA PCI 1200).